The following is a 218-amino-acid chain: Adenylate kinase (218 aa).

Position 10–15 (10–15 (GAGKGT)) interacts with ATP. The tract at residues 30-59 (STGDMLRAAINEGTPLGLEAKKVMDAGKLV) is NMP. AMP-binding positions include threonine 31, arginine 36, 57 to 59 (KLV), 85 to 88 (GFPR), and glutamine 92. Positions 122–159 (GRRVHPASGRTYHVLFNPPAKEGVDDITGDPLVQREDD) are LID. ATP is bound by residues arginine 123 and 132–133 (TY). AMP is bound by residues arginine 156 and arginine 167. Glycine 203 provides a ligand contact to ATP.

Belongs to the adenylate kinase family. Monomer.

Its subcellular location is the cytoplasm. It carries out the reaction AMP + ATP = 2 ADP. It participates in purine metabolism; AMP biosynthesis via salvage pathway; AMP from ADP: step 1/1. Its function is as follows. Catalyzes the reversible transfer of the terminal phosphate group between ATP and AMP. Plays an important role in cellular energy homeostasis and in adenine nucleotide metabolism. This Chlorobium phaeobacteroides (strain BS1) protein is Adenylate kinase.